The chain runs to 316 residues: Na(+)-translocating NADH-quinone reductase subunit C (316 aa).

Residues W13–V33 traverse the membrane as a helical segment. Position 280 is an FMN phosphoryl threonine (T280).

This sequence belongs to the NqrC family. In terms of assembly, composed of six subunits; NqrA, NqrB, NqrC, NqrD, NqrE and NqrF. It depends on FMN as a cofactor.

It is found in the cell inner membrane. It catalyses the reaction a ubiquinone + n Na(+)(in) + NADH + H(+) = a ubiquinol + n Na(+)(out) + NAD(+). In terms of biological role, NQR complex catalyzes the reduction of ubiquinone-1 to ubiquinol by two successive reactions, coupled with the transport of Na(+) ions from the cytoplasm to the periplasm. NqrA to NqrE are probably involved in the second step, the conversion of ubisemiquinone to ubiquinol. The polypeptide is Na(+)-translocating NADH-quinone reductase subunit C (Chlamydia trachomatis serovar D (strain ATCC VR-885 / DSM 19411 / UW-3/Cx)).